Consider the following 1058-residue polypeptide: Carbamoyl phosphate synthase large chain (1058 aa).

The segment at 1-399 is carboxyphosphate synthetic domain; the sequence is MPIDKDIKKV…AIQKAIRSLD (399 aa). Residues arginine 127, arginine 167, glycine 173, glycine 174, glutamate 206, valine 208, glutamate 213, glycine 239, isoleucine 240, histidine 241, glutamine 282, and glutamate 296 each contribute to the ATP site. An ATP-grasp 1 domain is found at 131-325; that stretch reads GHFMDKLNEP…IAKISSKIAL (195 aa). The Mg(2+) site is built by glutamine 282, glutamate 296, and asparagine 298. Mn(2+) is bound by residues glutamine 282, glutamate 296, and asparagine 298. The oligomerization domain stretch occupies residues 400-538; the sequence is MGHDGFEYVE…YSTYDSGNEL (139 aa). Residues 539–924 form a carbamoyl phosphate synthetic domain region; the sequence is KSSNKKKIVI…YKSQLAAGMD (386 aa). Residues 663 to 856 enclose the ATP-grasp 2 domain; sequence AKLLNKLHIH…LAKVATWIMT (194 aa). ATP is bound by residues arginine 699, lysine 738, leucine 740, glutamate 745, glycine 770, valine 771, histidine 772, serine 773, glutamine 813, and glutamate 827. The Mg(2+) site is built by glutamine 813, glutamate 827, and asparagine 829. 3 residues coordinate Mn(2+): glutamine 813, glutamate 827, and asparagine 829. The region spanning 923-1058 is the MGS-like domain; it reads MDLPKEGKIF…KSLNEHIDGE (136 aa). The allosteric domain stretch occupies residues 925–1058; the sequence is LPKEGKIFIS…KSLNEHIDGE (134 aa).

Belongs to the CarB family. In terms of assembly, composed of two chains; the small (or glutamine) chain promotes the hydrolysis of glutamine to ammonia, which is used by the large (or ammonia) chain to synthesize carbamoyl phosphate. Tetramer of heterodimers (alpha,beta)4. Mg(2+) is required as a cofactor. It depends on Mn(2+) as a cofactor.

It carries out the reaction hydrogencarbonate + L-glutamine + 2 ATP + H2O = carbamoyl phosphate + L-glutamate + 2 ADP + phosphate + 2 H(+). The enzyme catalyses hydrogencarbonate + NH4(+) + 2 ATP = carbamoyl phosphate + 2 ADP + phosphate + 2 H(+). It functions in the pathway amino-acid biosynthesis; L-arginine biosynthesis; carbamoyl phosphate from bicarbonate: step 1/1. Its pathway is pyrimidine metabolism; UMP biosynthesis via de novo pathway; (S)-dihydroorotate from bicarbonate: step 1/3. Functionally, large subunit of the glutamine-dependent carbamoyl phosphate synthetase (CPSase). CPSase catalyzes the formation of carbamoyl phosphate from the ammonia moiety of glutamine, carbonate, and phosphate donated by ATP, constituting the first step of 2 biosynthetic pathways, one leading to arginine and/or urea and the other to pyrimidine nucleotides. The large subunit (synthetase) binds the substrates ammonia (free or transferred from glutamine from the small subunit), hydrogencarbonate and ATP and carries out an ATP-coupled ligase reaction, activating hydrogencarbonate by forming carboxy phosphate which reacts with ammonia to form carbamoyl phosphate. The sequence is that of Carbamoyl phosphate synthase large chain from Methanobrevibacter smithii (strain ATCC 35061 / DSM 861 / OCM 144 / PS).